A 700-amino-acid polypeptide reads, in one-letter code: Elongation factor G (700 aa).

A tr-type G domain is found at 8–290 (ERYRNIGISA…AVVEYLPAPT (283 aa)). Residues 17-24 (AHIDAGKT), 88-92 (DTPGH), and 142-145 (NKMD) each bind GTP.

The protein belongs to the TRAFAC class translation factor GTPase superfamily. Classic translation factor GTPase family. EF-G/EF-2 subfamily.

Its subcellular location is the cytoplasm. Its function is as follows. Catalyzes the GTP-dependent ribosomal translocation step during translation elongation. During this step, the ribosome changes from the pre-translocational (PRE) to the post-translocational (POST) state as the newly formed A-site-bound peptidyl-tRNA and P-site-bound deacylated tRNA move to the P and E sites, respectively. Catalyzes the coordinated movement of the two tRNA molecules, the mRNA and conformational changes in the ribosome. This is Elongation factor G from Haemophilus influenzae (strain 86-028NP).